Reading from the N-terminus, the 379-residue chain is Cyclin-dependent kinase-like 4 (379 aa).

The Protein kinase domain maps to 4–286 (YEKLAKTGEG…CSQLLESSYF (283 aa)). Residues 10-18 (TGEGSYGVV) and Lys-33 contribute to the ATP site. The short motif at 45 to 51 (KKIALRE) is the [NKR]KIAxRE element. Asp-126 serves as the catalytic Proton acceptor.

Belongs to the protein kinase superfamily. CMGC Ser/Thr protein kinase family. CDC2/CDKX subfamily.

The protein resides in the cytoplasm. The enzyme catalyses L-seryl-[protein] + ATP = O-phospho-L-seryl-[protein] + ADP + H(+). The catalysed reaction is L-threonyl-[protein] + ATP = O-phospho-L-threonyl-[protein] + ADP + H(+). The sequence is that of Cyclin-dependent kinase-like 4 (CDKL4) from Homo sapiens (Human).